The following is a 479-amino-acid chain: Ribosomal RNA small subunit methyltransferase F (479 aa).

Residues 125-131 (AAAPGSK), Glu149, Asp176, and Asp194 each bind S-adenosyl-L-methionine. The active-site Nucleophile is Cys247.

This sequence belongs to the class I-like SAM-binding methyltransferase superfamily. RsmB/NOP family.

The protein resides in the cytoplasm. The catalysed reaction is cytidine(1407) in 16S rRNA + S-adenosyl-L-methionine = 5-methylcytidine(1407) in 16S rRNA + S-adenosyl-L-homocysteine + H(+). In terms of biological role, specifically methylates the cytosine at position 1407 (m5C1407) of 16S rRNA. This is Ribosomal RNA small subunit methyltransferase F from Shigella boydii serotype 4 (strain Sb227).